Consider the following 307-residue polypeptide: Acetyl-coenzyme A carboxylase carboxyl transferase subunit beta (307 aa).

The CoA carboxyltransferase N-terminal domain occupies 25–294 (VWTKCTSCEQ…PLVVPIEQPK (270 aa)). Zn(2+)-binding residues include Cys29, Cys32, Cys48, and Cys51. Residues 29–51 (CTSCEQVLYHADLERNLEVCPKC) form a C4-type zinc finger.

It belongs to the AccD/PCCB family. As to quaternary structure, acetyl-CoA carboxylase is a heterohexamer composed of biotin carboxyl carrier protein (AccB), biotin carboxylase (AccC) and two subunits each of ACCase subunit alpha (AccA) and ACCase subunit beta (AccD). It depends on Zn(2+) as a cofactor.

Its subcellular location is the cytoplasm. It carries out the reaction N(6)-carboxybiotinyl-L-lysyl-[protein] + acetyl-CoA = N(6)-biotinyl-L-lysyl-[protein] + malonyl-CoA. Its pathway is lipid metabolism; malonyl-CoA biosynthesis; malonyl-CoA from acetyl-CoA: step 1/1. Functionally, component of the acetyl coenzyme A carboxylase (ACC) complex. Biotin carboxylase (BC) catalyzes the carboxylation of biotin on its carrier protein (BCCP) and then the CO(2) group is transferred by the transcarboxylase to acetyl-CoA to form malonyl-CoA. The sequence is that of Acetyl-coenzyme A carboxylase carboxyl transferase subunit beta from Photobacterium profundum (strain SS9).